The primary structure comprises 567 residues: Urease subunit alpha (567 aa).

Residues 129 to 567 (GGIDSHIHFI…LPMAQRYFLF (439 aa)) form the Urease domain. Residues His-134, His-136, and Lys-217 each contribute to the Ni(2+) site. Lys-217 is subject to N6-carboxylysine. His-219 is a substrate binding site. Residues His-246 and His-272 each coordinate Ni(2+). Residue His-320 is the Proton donor of the active site. Asp-360 serves as a coordination point for Ni(2+).

The protein belongs to the metallo-dependent hydrolases superfamily. Urease alpha subunit family. As to quaternary structure, heterotrimer of UreA (gamma), UreB (beta) and UreC (alpha) subunits. Three heterotrimers associate to form the active enzyme. Ni cation is required as a cofactor. Carboxylation allows a single lysine to coordinate two nickel ions.

The protein resides in the cytoplasm. It carries out the reaction urea + 2 H2O + H(+) = hydrogencarbonate + 2 NH4(+). It functions in the pathway nitrogen metabolism; urea degradation; CO(2) and NH(3) from urea (urease route): step 1/1. This chain is Urease subunit alpha, found in Alcanivorax borkumensis (strain ATCC 700651 / DSM 11573 / NCIMB 13689 / SK2).